The primary structure comprises 66 residues: MKATELQKFTDEELKQMLDDLKRKLMDLRFQLEMNKLTNTSQIKFVKRDIARIKTILRGRELGVRR.

It belongs to the universal ribosomal protein uL29 family.

The protein is Large ribosomal subunit protein uL29 of Kosmotoga olearia (strain ATCC BAA-1733 / DSM 21960 / TBF 19.5.1).